We begin with the raw amino-acid sequence, 124 residues long: Small ribosomal subunit protein bS16 (124 aa).

Positions 80-124 (AGLAKRPARNNPTKAQPGKKAQERAAEAKQKAEEAAAAASEAAAE) are disordered. The span at 99–113 (KAQERAAEAKQKAEE) shows a compositional bias: basic and acidic residues. The segment covering 114 to 124 (AAAAASEAAAE) has biased composition (low complexity).

This sequence belongs to the bacterial ribosomal protein bS16 family.

This chain is Small ribosomal subunit protein bS16, found in Rhizobium meliloti (strain 1021) (Ensifer meliloti).